A 118-amino-acid polypeptide reads, in one-letter code: Beta-defensin 126 (118 aa).

Positions 1–20 (MKSLLFTLAVFMLLAQLVSG) are cleaved as a signal peptide. The segment at 21–63 (SWYVKKCLNDVGICKKKCKPEELHVKNGWAMCGKQRDCCVPAD) is in vitro binds to LPS, mediates antimicrobial activity and inhibits LPS-mediated inflammation. Intrachain disulfides connect C27–C58, C34–C52, and C38–C59.

Belongs to the beta-defensin family. In terms of assembly, homodimer or homooligomer; disulfide-linked. Post-translationally, O-glycosylated; glycans contain alpha(2,3)-linked sialic acids.

It is found in the secreted. Its function is as follows. Highly glycosylated atypical beta-defensin involved in several aspects of sperm function. Facilitates sperm transport in the female reproductive tract and contributes to sperm protection against immunodetection; both functions are probably implicating the negative surface charge provided by its O-linked oligosaccharides in the sperm glycocalyx. Involved in binding of sperm to oviductal epithelial cells to form a sperm reservoir until ovulation. Release from the sperm surface during capacitation and ovaluation by an elevation of oviductal fluid pH is unmasking other surface components and allows sperm to penetrate the cumulus matrix and bind to the zona pellucida of the oocyte. In vitro has antimicrobial activity and may inhibit LPS-mediated inflammation. The sequence is that of Beta-defensin 126 (DEFB126) from Pongo pygmaeus (Bornean orangutan).